Consider the following 145-residue polypeptide: 3-dehydroquinate dehydratase (145 aa).

Tyrosine 23 functions as the Proton acceptor in the catalytic mechanism. Residues asparagine 75, histidine 81, and aspartate 88 each contribute to the substrate site. Histidine 101 (proton donor) is an active-site residue. Residues 102-103 (IS) and arginine 112 contribute to the substrate site.

Belongs to the type-II 3-dehydroquinase family. In terms of assembly, homododecamer.

It catalyses the reaction 3-dehydroquinate = 3-dehydroshikimate + H2O. It participates in metabolic intermediate biosynthesis; chorismate biosynthesis; chorismate from D-erythrose 4-phosphate and phosphoenolpyruvate: step 3/7. In terms of biological role, catalyzes a trans-dehydration via an enolate intermediate. The sequence is that of 3-dehydroquinate dehydratase from Caldicellulosiruptor bescii (strain ATCC BAA-1888 / DSM 6725 / KCTC 15123 / Z-1320) (Anaerocellum thermophilum).